The chain runs to 514 residues: Pentatricopeptide repeat-containing protein At4g26800 (514 aa).

PPR repeat units lie at residues 122–156 (DLYTCNILVNCFCRCFQPSSALSYLGKMMKLGIEP), 157–191 (DIVTASSLVNGFCLSNSIKDAVYVAGQMEKMGIKR), 192–226 (DVVVDTILIDTLCKNRLVVPALEVLKRMKDRGISP), 227–261 (NVVTYSSLITGLCKSGRLADAERRLHEMDSKKINP), 262–296 (NVITFSALIDAYAKRGKLSKVDSVYKMMIQMSIDP), 297–331 (NVFTYSSLIYGLCMHNRVDEAIKMLDLMISKGCTP), 332–366 (NVVTYSTLANGFFKSSRVDDGIKLLDDMPQRGVAA), 367–401 (NTVSCNTLIKGYFQAGKIDLALGVFGYMTSNGLIP), 402–436 (NIRSYNIVLAGLFANGEVEKALSRFEHMQKTRNDL), 437–471 (DIITYTIMIHGMCKACMVKEAYDLFYKLKFKRVEP), and 472–510 (DFKAYTIMIAELNRAGMRTEADALNRFYQKHVRQNESAP).

Belongs to the PPR family. P subfamily.

The sequence is that of Pentatricopeptide repeat-containing protein At4g26800 from Arabidopsis thaliana (Mouse-ear cress).